Here is a 35-residue protein sequence, read N- to C-terminus: Putative gastric cancer-related gene 224 protein (35 aa).

In terms of tissue distribution, expressed in gastric mucosa.

This is Putative gastric cancer-related gene 224 protein (GCRG224) from Homo sapiens (Human).